The sequence spans 179 residues: Interleukin-22b (179 aa).

Positions 1–33 are cleaved as a signal peptide; sequence MAVLQKSMSFSLMGTLAASCLLLIALWAQEANA. 2 disulfides stabilise this stretch: Cys40/Cys132 and Cys89/Cys178. Asn54, Asn68, and Asn97 each carry an N-linked (GlcNAc...) asparagine glycan.

It belongs to the IL-10 family.

It is found in the secreted. Functionally, cytokine that contributes to the inflammatory response in vivo. In Mus musculus (Mouse), this protein is Interleukin-22b.